The following is a 360-amino-acid chain: MYGLLRRLLFLLPPERVHKLVFAVLRGATAATPVRRMLTRWLGPTDPVLASTVFGVRFPGPLGLAAGFDKDGTGLDTWAAMGFGYAEVGTVTAHPQPGNPAPRLFRLPEDRALLNRMGFNNHGAGALAIRLARHHPEVPVGVNIGKTKTTPADQAVDDYRASARLVGPLASYLVVNVSSPNTPGLRDLQAVESLRPILAAVLAETSTPVLVKIAPDLSDSDVDEVADLAVELGLAGIVATNTTVSRDGLLTPGVGQLGAGGISGPPVAERSLEVLCRLYQRVGDRLTLISVGGIETAEDAWDRITAGASLLQGYTGFIYGGGLWSKHIHDGIARRLHQGGFGSLHEAVGSNAAERGRPPS.

Residues 66–70 (AGFDK) and T90 contribute to the FMN site. Substrate is bound at residue K70. 115–119 (NRMGF) lines the substrate pocket. 2 residues coordinate FMN: N143 and N176. N176 contacts substrate. The active-site Nucleophile is S179. N181 serves as a coordination point for substrate. The FMN site is built by K212 and T240. 241 to 242 (NT) contributes to the substrate binding site. FMN is bound by residues G264, G293, and 314–315 (YT).

The protein belongs to the dihydroorotate dehydrogenase family. Type 2 subfamily. As to quaternary structure, monomer. FMN serves as cofactor.

The protein localises to the cell membrane. The enzyme catalyses (S)-dihydroorotate + a quinone = orotate + a quinol. The protein operates within pyrimidine metabolism; UMP biosynthesis via de novo pathway; orotate from (S)-dihydroorotate (quinone route): step 1/1. Its function is as follows. Catalyzes the conversion of dihydroorotate to orotate with quinone as electron acceptor. The sequence is that of Dihydroorotate dehydrogenase (quinone) from Mycobacterium marinum (strain ATCC BAA-535 / M).